A 224-amino-acid polypeptide reads, in one-letter code: 7-cyano-7-deazaguanine synthase (224 aa).

ATP is bound at residue leucine 12–threonine 22. Positions 193, 201, 204, and 207 each coordinate Zn(2+).

The protein belongs to the QueC family. Requires Zn(2+) as cofactor.

It carries out the reaction 7-carboxy-7-deazaguanine + NH4(+) + ATP = 7-cyano-7-deazaguanine + ADP + phosphate + H2O + H(+). The protein operates within purine metabolism; 7-cyano-7-deazaguanine biosynthesis. Its function is as follows. Catalyzes the ATP-dependent conversion of 7-carboxy-7-deazaguanine (CDG) to 7-cyano-7-deazaguanine (preQ(0)). The sequence is that of 7-cyano-7-deazaguanine synthase from Prochlorococcus marinus (strain MIT 9312).